The sequence spans 85 residues: Metallothionein-like protein 4B (85 aa).

The tract at residues 1–20 (MADTGKGSASASCNDRCGCP) is disordered.

This sequence belongs to the metallothionein superfamily. Type 15 family. In terms of tissue distribution, expressed specifically in seeds.

It is found in the cytoplasm. Its subcellular location is the nucleus. The protein localises to the cell membrane. Metallothioneins have a high content of cysteine residues that bind various heavy metals. Functions as a metal chelator of copper (Cu) and zinc (Zn). Plays a role in storing and distributing Zn ion in seed. In Arabidopsis thaliana (Mouse-ear cress), this protein is Metallothionein-like protein 4B (MT4B).